Here is a 430-residue protein sequence, read N- to C-terminus: Adenylosuccinate synthetase (430 aa).

GTP is bound by residues 13 to 19 (GDEGKGK) and 41 to 43 (GHT). The Proton acceptor role is filled by Asp-14. Mg(2+) is bound by residues Asp-14 and Gly-41. IMP contacts are provided by residues 14–17 (DEGK), 39–42 (NAGH), Thr-130, Arg-144, Gln-225, Thr-240, and Arg-304. Catalysis depends on His-42, which acts as the Proton donor. 300 to 306 (STTGRAR) lines the substrate pocket. GTP contacts are provided by residues Arg-306, 332-334 (KLD), and 414-416 (STG).

Belongs to the adenylosuccinate synthetase family. In terms of assembly, homodimer. Requires Mg(2+) as cofactor.

The protein resides in the cytoplasm. It catalyses the reaction IMP + L-aspartate + GTP = N(6)-(1,2-dicarboxyethyl)-AMP + GDP + phosphate + 2 H(+). It participates in purine metabolism; AMP biosynthesis via de novo pathway; AMP from IMP: step 1/2. In terms of biological role, plays an important role in the de novo pathway of purine nucleotide biosynthesis. Catalyzes the first committed step in the biosynthesis of AMP from IMP. The chain is Adenylosuccinate synthetase from Pseudomonas putida (strain W619).